A 332-amino-acid polypeptide reads, in one-letter code: Nuclear hormone receptor family member nhr-9 (332 aa).

Residues 11–85 (ERRCAICSKL…MGMRIVTNQY (75 aa)) constitute a DNA-binding region (nuclear receptor). NR C4-type zinc fingers lie at residues 14–34 (CAICSKLGNSYNYGVLSCNAC) and 50–73 (CINNDNCDTSNLILTCRQCRYNKC). The 232-residue stretch at 101 to 332 (DRSNKLMNFQ…KRLCAELLGA (232 aa)) folds into the NR LBD domain.

Belongs to the nuclear hormone receptor family.

It is found in the nucleus. Functionally, orphan nuclear receptor. The sequence is that of Nuclear hormone receptor family member nhr-9 (nhr-9) from Caenorhabditis elegans.